The primary structure comprises 440 residues: 6-phospho-alpha-glucosidase (440 aa).

Residue 4 to 70 (FSVVIAGGGS…PEIEFSYTTD (67 aa)) participates in NAD(+) binding. Substrate is bound by residues Arg93 and Asn147. Cys169 is a Mn(2+) binding site. Asp170 functions as the Proton donor in the catalytic mechanism. Residue His200 participates in Mn(2+) binding. Tyr263 serves as the catalytic Proton acceptor. Arg283 contributes to the substrate binding site.

Homodimer. NAD(+) serves as cofactor. The cofactor is Mn(2+). Requires Co(2+) as cofactor. It depends on Ni(2+) as a cofactor.

It catalyses the reaction alpha-maltose 6'-phosphate + H2O = D-glucose 6-phosphate + D-glucose. It participates in glycan biosynthesis; sucrose metabolism. Is involved in the catabolism of alpha-glycosides accumulated via a phosphoenolpyruvate-dependent phosphotransferase system (PEP-PTS). Hydrolyzes a wide variety of 6-phospho-alpha-D-glucosides including maltose-6'-phosphate, isomaltose-6'-phosphate, maltitol-6-phosphate, trehalose-6-phosphate and the 6'-phosphorylated derivatives of the five linkage-isomeric alpha-D-glucosyl-D-fructoses: trehalulose-6'-phosphate, turanose-6'-phosphate, maltulose-6'-phosphate, leucrose-6'-phosphate, and palatinose-6'-phosphate. However, sucrose-6-phosphate is not a substrate for this enzyme. The protein is 6-phospho-alpha-glucosidase of Klebsiella pneumoniae.